A 344-amino-acid polypeptide reads, in one-letter code: Phosphoribosylformylglycinamidine cyclo-ligase (344 aa).

The protein belongs to the AIR synthase family.

Its subcellular location is the cytoplasm. The enzyme catalyses 2-formamido-N(1)-(5-O-phospho-beta-D-ribosyl)acetamidine + ATP = 5-amino-1-(5-phospho-beta-D-ribosyl)imidazole + ADP + phosphate + H(+). It functions in the pathway purine metabolism; IMP biosynthesis via de novo pathway; 5-amino-1-(5-phospho-D-ribosyl)imidazole from N(2)-formyl-N(1)-(5-phospho-D-ribosyl)glycinamide: step 2/2. The sequence is that of Phosphoribosylformylglycinamidine cyclo-ligase from Haemophilus influenzae (strain PittGG).